The following is a 198-amino-acid chain: Imidazoleglycerol-phosphate dehydratase (198 aa).

It belongs to the imidazoleglycerol-phosphate dehydratase family.

The protein resides in the cytoplasm. The catalysed reaction is D-erythro-1-(imidazol-4-yl)glycerol 3-phosphate = 3-(imidazol-4-yl)-2-oxopropyl phosphate + H2O. The protein operates within amino-acid biosynthesis; L-histidine biosynthesis; L-histidine from 5-phospho-alpha-D-ribose 1-diphosphate: step 6/9. The polypeptide is Imidazoleglycerol-phosphate dehydratase (Janthinobacterium sp. (strain Marseille) (Minibacterium massiliensis)).